Here is a 191-residue protein sequence, read N- to C-terminus: MSLISRLKAVVAGDDFLDDDFDELDYASEDEFNGNDDLKQNYKKSNALSNSNPFEFMNNNRTSNVVGMPGIANSSSEVNLMEPRSFDEMPQAIQALRERKTVILNLTMMDPDQAQRAVDFVAGGTYAIDGHQERVGESIFLFAPSCVNVTSSFPEEASPSNVSSKKTSQYKFETNTTPEPAWGESKLSAYN.

A compositionally biased stretch (polar residues) spans F153–P178. The tract at residues F153–N191 is disordered.

The protein belongs to the SepF family. As to quaternary structure, homodimer. Interacts with FtsZ.

It localises to the cytoplasm. Its function is as follows. Cell division protein that is part of the divisome complex and is recruited early to the Z-ring. Probably stimulates Z-ring formation, perhaps through the cross-linking of FtsZ protofilaments. Its function overlaps with FtsA. The chain is Cell division protein SepF from Prochlorococcus marinus subsp. pastoris (strain CCMP1986 / NIES-2087 / MED4).